We begin with the raw amino-acid sequence, 148 residues long: Lipoprotein signal peptidase (148 aa).

The next 2 helical transmembrane spans lie at 57 to 77 (VLLV…FIKY) and 88 to 105 (VSFI…RIFY). Residues aspartate 110 and aspartate 129 contribute to the active site. A helical membrane pass occupies residues 124–144 (TFNIADILVVVGTIMLAIFLL).

Belongs to the peptidase A8 family.

The protein localises to the cell membrane. It carries out the reaction Release of signal peptides from bacterial membrane prolipoproteins. Hydrolyzes -Xaa-Yaa-Zaa-|-(S,diacylglyceryl)Cys-, in which Xaa is hydrophobic (preferably Leu), and Yaa (Ala or Ser) and Zaa (Gly or Ala) have small, neutral side chains.. It functions in the pathway protein modification; lipoprotein biosynthesis (signal peptide cleavage). Its function is as follows. This protein specifically catalyzes the removal of signal peptides from prolipoproteins. This is Lipoprotein signal peptidase from Clostridium novyi (strain NT).